Consider the following 214-residue polypeptide: Predicted GPI-anchored protein 57 (214 aa).

The N-terminal stretch at 1–18 is a signal peptide; it reads MLFTQLIILFTFISQIIC. The segment at 36–101 is disordered; that stretch reads RGSSGHSSGG…SSGSSSGSRN (66 aa). Over residues 42-60 the composition is skewed to gly residues; sequence SSGGGHSSSGSHSSGGGHS. A compositionally biased stretch (low complexity) spans 76-85; the sequence is SGSSSGSSSG. The N-linked (GlcNAc...) asparagine glycan is linked to asparagine 182. Glycine 191 carries the GPI-anchor amidated glycine lipid modification. Residues 192–214 constitute a propeptide, removed in mature form; that stretch reads VSLNIPSTHFYVIGLAAAYSIVL.

This sequence belongs to the PGA37 family.

Its subcellular location is the secreted. It is found in the cell membrane. In terms of biological role, predicted GPI-anchored protein which may have a role during host infection. The sequence is that of Predicted GPI-anchored protein 57 (PGA57) from Candida albicans (strain SC5314 / ATCC MYA-2876) (Yeast).